A 193-amino-acid polypeptide reads, in one-letter code: Mediator of RNA polymerase II transcription subunit 30 (193 aa).

Positions 1–20 (MSTPPLAASGMAPGPFAGPQ) are disordered. An N-acetylserine modification is found at Ser-2. Over residues 10–20 (GMAPGPFAGPQ) the composition is skewed to low complexity. A coiled-coil region spans residues 71–93 (YQDRLAKLQDHLRQLSILFRKLR).

This sequence belongs to the Mediator complex subunit 30 family. In terms of assembly, component of the Mediator complex, which is composed of MED1, MED4, MED6, MED7, MED8, MED9, MED10, MED11, MED12, MED13, MED13L, MED14, MED15, MED16, MED17, MED18, MED19, MED20, MED21, MED22, MED23, MED24, MED25, MED26, MED27, MED29, MED30, MED31, CCNC, CDK8 and CDC2L6/CDK11. The MED12, MED13, CCNC and CDK8 subunits form a distinct module termed the CDK8 module. Mediator containing the CDK8 module is less active than Mediator lacking this module in supporting transcriptional activation. Individual preparations of the Mediator complex lacking one or more distinct subunits have been variously termed ARC, CRSP, DRIP, PC2, SMCC and TRAP.

It is found in the nucleus. Its function is as follows. Component of the Mediator complex, a coactivator involved in the regulated transcription of nearly all RNA polymerase II-dependent genes. Mediator functions as a bridge to convey information from gene-specific regulatory proteins to the basal RNA polymerase II transcription machinery. Mediator is recruited to promoters by direct interactions with regulatory proteins and serves as a scaffold for the assembly of a functional preinitiation complex with RNA polymerase II and the general transcription factors. The sequence is that of Mediator of RNA polymerase II transcription subunit 30 (MED30) from Bos taurus (Bovine).